We begin with the raw amino-acid sequence, 358 residues long: tRNA-specific 2-thiouridylase MnmA (358 aa).

Residues 8 to 15 (GMSGGVDS) and Met34 contribute to the ATP site. Cys103 acts as the Nucleophile in catalysis. The cysteines at positions 103 and 199 are disulfide-linked. Residue Gly127 coordinates ATP. The tract at residues 149-151 (KDQ) is interaction with tRNA. The Cysteine persulfide intermediate role is filled by Cys199. Positions 305–306 (RY) are interaction with tRNA.

Belongs to the MnmA/TRMU family.

Its subcellular location is the cytoplasm. The enzyme catalyses S-sulfanyl-L-cysteinyl-[protein] + uridine(34) in tRNA + AH2 + ATP = 2-thiouridine(34) in tRNA + L-cysteinyl-[protein] + A + AMP + diphosphate + H(+). In terms of biological role, catalyzes the 2-thiolation of uridine at the wobble position (U34) of tRNA, leading to the formation of s(2)U34. In Clostridium beijerinckii (strain ATCC 51743 / NCIMB 8052) (Clostridium acetobutylicum), this protein is tRNA-specific 2-thiouridylase MnmA.